Reading from the N-terminus, the 218-residue chain is Small ribosomal subunit protein uS3c (218 aa).

One can recognise a KH type-2 domain in the interval 47 to 118; the sequence is VQKEMRISSG…RLNVVITRVA (72 aa).

The protein belongs to the universal ribosomal protein uS3 family. Part of the 30S ribosomal subunit.

It localises to the plastid. The protein resides in the chloroplast. The chain is Small ribosomal subunit protein uS3c (rps3) from Ceratophyllum demersum (Rigid hornwort).